The sequence spans 403 residues: Serine/threonine-protein phosphatase 4 regulatory subunit 2-A (403 aa).

Composition is skewed to polar residues over residues 140–149 (EKNNSTSLNR), 156–170 (PSNS…NVNG), and 183–196 (SLSS…LPDS). Residues 140-403 (EKNNSTSLNR…DAPEEPMEQD (264 aa)) are disordered. The segment covering 197 to 211 (TENKESDLQQKEKSQ) has biased composition (basic and acidic residues). Composition is skewed to polar residues over residues 212–226 (SDSA…ATTS) and 371–387 (ATSS…SPME). Residues 388-403 (NSEEATDAPEEPMEQD) show a composition bias toward acidic residues.

The protein belongs to the PPP4R2 family. As to quaternary structure, serine/threonine-protein phosphatase 4 (PP4) occurs in different assemblies of the catalytic and one or more regulatory subunits.

In terms of biological role, regulatory subunit of serine/threonine-protein phosphatase 4 (PP4). The chain is Serine/threonine-protein phosphatase 4 regulatory subunit 2-A (ppp4r2-a) from Xenopus laevis (African clawed frog).